A 100-amino-acid chain; its full sequence is Urease subunit gamma (100 aa).

It belongs to the urease gamma subunit family. In terms of assembly, heterotrimer of UreA (gamma), UreB (beta) and UreC (alpha) subunits. Three heterotrimers associate to form the active enzyme.

Its subcellular location is the cytoplasm. The enzyme catalyses urea + 2 H2O + H(+) = hydrogencarbonate + 2 NH4(+). It participates in nitrogen metabolism; urea degradation; CO(2) and NH(3) from urea (urease route): step 1/1. The sequence is that of Urease subunit gamma from Photorhabdus laumondii subsp. laumondii (strain DSM 15139 / CIP 105565 / TT01) (Photorhabdus luminescens subsp. laumondii).